The following is a 365-amino-acid chain: Putative fatty acid elongase 2 (365 aa).

The Lumenal segment spans residues 1–68; the sequence is MPDSPTLHHN…SFEFIVNKTR (68 aa). Residues Asn17 and Asn65 are each glycosylated (N-linked (GlcNAc...) asparagine). The chain crosses the membrane as a helical span at residues 69-89; that stretch reads FSSAPVVATIIISYYLLILVG. The Cytoplasmic segment spans residues 90 to 111; that stretch reads GRIMRNRQPIRLQKIFQYYNLT. A helical membrane pass occupies residues 112-132; it reads FSIASAILALLIFEQVAPAIY. At 133–149 the chain is on the lumenal side; it reads KHGFFFSICNEKAWTQP. A helical transmembrane segment spans residues 150–170; sequence LVFLYYCAYISKFLELTDTFF. Over 171 to 179 the chain is Cytoplasmic; it reads LVLRKKPLQ. The chain crosses the membrane as a helical span at residues 180 to 198; sequence FLHCYHHGATAVLVYTQIV. Residues 199–204 lie on the Lumenal side of the membrane; that stretch reads GRTSIS. Residues 205–225 form a helical membrane-spanning segment; that stretch reads WLIIEINLLVHVTMYYYYYLV. The Cytoplasmic segment spans residues 226 to 241; it reads AKGIRVPWKKWVTRFQ. A helical transmembrane segment spans residues 242-262; the sequence is IVQFFADLGFIYFAVYTEVAY. The Lumenal portion of the chain corresponds to 263 to 278; that stretch reads RLKFYKACMGHCSGHP. Residues 279–299 traverse the membrane as a helical segment; that stretch reads LAAFCGLATISSYLVLFIVFY. Topologically, residues 300–365 are cytoplasmic; the sequence is HNTYKKNAAL…PISSGLNNEK (66 aa).

This sequence belongs to the ELO family.

It is found in the endoplasmic reticulum membrane. It carries out the reaction a very-long-chain acyl-CoA + malonyl-CoA + H(+) = a very-long-chain 3-oxoacyl-CoA + CO2 + CoA. In terms of biological role, may be involved in the synthesis of very long chain fatty acids. This chain is Putative fatty acid elongase 2, found in Schizosaccharomyces pombe (strain 972 / ATCC 24843) (Fission yeast).